Consider the following 179-residue polypeptide: NAD(P)H-quinone oxidoreductase subunit J (179 aa).

Belongs to the complex I 30 kDa subunit family. In terms of assembly, NDH-1 can be composed of about 15 different subunits; different subcomplexes with different compositions have been identified which probably have different functions. In at one experiment the initiator methionine has been seen to be kept and removed.

The protein resides in the cellular thylakoid membrane. It catalyses the reaction a plastoquinone + NADH + (n+1) H(+)(in) = a plastoquinol + NAD(+) + n H(+)(out). It carries out the reaction a plastoquinone + NADPH + (n+1) H(+)(in) = a plastoquinol + NADP(+) + n H(+)(out). Its function is as follows. NDH-1 shuttles electrons from an unknown electron donor, via FMN and iron-sulfur (Fe-S) centers, to quinones in the respiratory and/or the photosynthetic chain. The immediate electron acceptor for the enzyme in this species is believed to be plastoquinone. Couples the redox reaction to proton translocation, and thus conserves the redox energy in a proton gradient. Cyanobacterial NDH-1 also plays a role in inorganic carbon-concentration. The chain is NAD(P)H-quinone oxidoreductase subunit J from Synechocystis sp. (strain ATCC 27184 / PCC 6803 / Kazusa).